The sequence spans 278 residues: MRSLWKGSISFGLVNIPVALYPATRSEELKFRLLRSSDLSPVNYKRVAQADGREVPWEQIVKGYEYEKGKFVVLKEDDFKRVDVEATQTVDIMDFVQLDEVNPMYFHKPYYLVPDKGGAPAYTLLHDVLTETKKAGIAKVVIRTRQHLAAVKAQGQALVLEIMHFAQELVDVGELDIPVAKGGAKRRELDMAKALVEQMTETWQPERYTDDYTSALMAMIKEKIESGGKTSGAAPKPRRATNVIDLAAVLQESLNQTGAGAKKKPAKTAKRGKSRKAA.

The 164-residue stretch at 9–172 (ISFGLVNIPV…MHFAQELVDV (164 aa)) folds into the Ku domain. Residues 255–278 (NQTGAGAKKKPAKTAKRGKSRKAA) are disordered. The segment covering 261-278 (AKKKPAKTAKRGKSRKAA) has biased composition (basic residues).

It belongs to the prokaryotic Ku family. Homodimer. Interacts with LigD.

Its function is as follows. With LigD forms a non-homologous end joining (NHEJ) DNA repair enzyme, which repairs dsDNA breaks with reduced fidelity. Binds linear dsDNA with 5'- and 3'- overhangs but not closed circular dsDNA nor ssDNA. Recruits and stimulates the ligase activity of LigD. This chain is Non-homologous end joining protein Ku, found in Opitutus terrae (strain DSM 11246 / JCM 15787 / PB90-1).